The primary structure comprises 96 residues: Co-chaperonin GroES (96 aa).

The protein belongs to the GroES chaperonin family. In terms of assembly, heptamer of 7 subunits arranged in a ring. Interacts with the chaperonin GroEL.

It localises to the cytoplasm. Its function is as follows. Together with the chaperonin GroEL, plays an essential role in assisting protein folding. The GroEL-GroES system forms a nano-cage that allows encapsulation of the non-native substrate proteins and provides a physical environment optimized to promote and accelerate protein folding. GroES binds to the apical surface of the GroEL ring, thereby capping the opening of the GroEL channel. The polypeptide is Co-chaperonin GroES (Methylobacterium radiotolerans (strain ATCC 27329 / DSM 1819 / JCM 2831 / NBRC 15690 / NCIMB 10815 / 0-1)).